Reading from the N-terminus, the 505-residue chain is Probable malate:quinone oxidoreductase (505 aa).

It belongs to the MQO family. Requires FAD as cofactor.

The enzyme catalyses (S)-malate + a quinone = a quinol + oxaloacetate. The protein operates within carbohydrate metabolism; tricarboxylic acid cycle; oxaloacetate from (S)-malate (quinone route): step 1/1. This Pseudomonas fluorescens protein is Probable malate:quinone oxidoreductase.